We begin with the raw amino-acid sequence, 472 residues long: MERPNPSVGGIYSGLHDNGPVENPAAEEEGLRLLAGAASARSGSSAGGGGGGGGGGEPEGRSGSSNGIVTEPDPEEGTSSGQRGEKRKLENDGADFLKELTLSLMSRCYPESVWWADLEDEFKNGNMNLLYKYGFEQLKTHWMEPWEDWELALNMFAKVALRPDTIYTIKKTVNIRKCAYVIGNGAVVRFQTFDRVVFNCAMQSLGPGVIGMSGVTFNNVRFAADGFNGKVFASTTQLTLHGVFFQNCSGVCVDSWGRVSARGCTFVGCWKGLVGQNKSQMSVKKCVFERCILAMVVEGQARIRHNAGSENVCFLLLKGTASVKHNMICGTGHSQLLTCADGNCQTLKVIHVVSHQRRPWPVFEHNMLMRCTMHLGARRGMFSPYQSNFCHTKVLMETDAFSRVWWSGVFDLTIELYKVVRYDELKARCRPCECGANHIRLYPATLNVTEQLRTDHQMLSCLRTDYESSDED.

Residues 1-90 (MERPNPSVGG…GQRGEKRKLE (90 aa)) form a disordered region. A compositionally biased stretch (low complexity) spans 32 to 44 (RLLAGAASARSGS). Over residues 45–57 (SAGGGGGGGGGGE) the composition is skewed to gly residues. Phosphoserine is present on residues serine 468 and serine 469.

It belongs to the adenoviridae E1B 55 kDa protein family. In terms of assembly, interacts with host PML-4 and PML-5; this interaction promotes efficient subnuclear targeting of E1B-55K to PML nuclear bodies. Interacts with E4-ORF3 protein. Interacts with E4-ORF6 protein.

The protein localises to the host nucleus. The protein resides in the host cytoplasm. Plays a major role to prevent cellular inhibition of viral genome replication. Assembles an SCF-like E3 ubiquitin ligase complex based on the cellular proteins ELOB, ELOC, CUL5 and RBX1, in cooperation with viral E4orf6. This viral RING-type ligase ubiquitinates cellular substrates and targets them to proteasomal degradation: TP53/p53, LIG4, MRE11-RAD50-NBS1 (MRN) complex, ITGA3, DAXX and BLM. E1B-55K probably acts as the substrate-specific adapter of the SCF-like E3 ubiquitin ligase complex. Degradation of host TP53/p53 activity is essential for preventing E1A-induced TP53 accumulation that would otherwise lead to cell apoptosis and growth arrest. E1B-55K also inactivates TP53 transcription-factor activity by binding its transactivation domain. E1B-55K also functions as a SUMO1 E3 ligase for TP53 which causes the latter to be sequestered in promyelocytic leukemia (PML) nuclear bodies thereby contributing to maximal inhibition of TP53 function. This is E1B 55 kDa protein from Homo sapiens (Human).